A 512-amino-acid polypeptide reads, in one-letter code: Glucagon-like peptide 2 receptor (512 aa).

Over 1 to 135 (MRRLWGPGTP…KQNVDHYHHT (135 aa)) the chain is Extracellular. 3 cysteine pairs are disulfide-bonded: C43-C65, C56-C97, and C78-C119. A glycan (N-linked (GlcNAc...) asparagine) is linked at N73. Residues 136–160 (LLSTLQLMYTVGYSLSLISLFLALT) form a helical membrane-spanning segment. Topologically, residues 161-172 (LFLFLRKLHCTR) are cytoplasmic. The helical transmembrane segment at 173–197 (NYIHMNLFASFILRALVVLVKDMVF) threads the bilayer. Over 198-223 (YNSYSRRPDSESGWMSYLSEISASCR) the chain is Extracellular. A helical membrane pass occupies residues 224–247 (SVQVLLHYFVGTNHLWLLVEGLYL). The Cytoplasmic segment spans residues 248 to 261 (HALLEPTVLPERRL). The chain crosses the membrane as a helical span at residues 262 to 283 (WPKYLVVGWAFPMLFVIPWIFV). Topologically, residues 284–301 (RASLENTGCWAVNENKKI) are extracellular. Residues 302–324 (WWIIRGPILLCVTVNFFIFLKIL) form a helical membrane-spanning segment. Over 325-348 (KLLISKFRAHQMCFRDYKYRLAKS) the chain is Cytoplasmic. Residues 349–367 (TLLLILLMGVHEFLFTFFT) traverse the membrane as a helical segment. Residues 368 to 379 (DDQVQGFSRLIR) lie on the Extracellular side of the membrane. Residues 380 to 400 (LFIQLTLSSFHGFLVALQYGF) form a helical membrane-spanning segment. The Cytoplasmic segment spans residues 401–512 (ASREVKAELR…MEEILEESEI (112 aa)). Residues 458 to 494 (SGVSSHLTAGNLRDHGAQPHRGRGAWPRASSLSESSE) form a disordered region.

It belongs to the G-protein coupled receptor 2 family.

Its subcellular location is the cell membrane. Functionally, this is a receptor for glucagon-like peptide 2. The activity of this receptor is mediated by G proteins which activate adenylyl cyclase. The polypeptide is Glucagon-like peptide 2 receptor (Glp2r) (Mus musculus (Mouse)).